The following is a 224-amino-acid chain: uncharacterized protein (224 aa).

Positions 108 to 137 (QLALDRAELNESIRATNENLALQYSKLQTE) form a coiled coil.

This is an uncharacterized protein from Human picobirnavirus (strain Human/Thailand/Hy005102/-) (PBV).